A 752-amino-acid polypeptide reads, in one-letter code: MAISSKEQETKKVKISVDKNPVDTSFEKWAQPGHFSRTLAKGPKTTTWIWNLHADAHDFDSQTSSLEEVSRKIFSAHFGQLAVIFLWLSGMYFHGARFSNYVAWLSNPTGIKPSAQVVWPIVGQEILNGDVGGGFQGVQVTSGWFQLWRASGITTEFQLYCTAIGGLGMAALMLFAGWFHYHKAAPKLEWFQNVESMMNHHLAGLLGLGCLGWAGHQIHLSLPINKLLDSGVSPQEIPLPHEFLINRELMAQLYPSFSKGLVPFFTLNWAEYSDFLTFKGGLNPVTGGLWLSDTAHHHLALAVLFLAAGHMYRTNWGIGHSMKEILEAHKGPFTGNGHEGLYEILTTSWHAQLAINLAMMGSLSIIVAHHMYAMPPYPYIATDYPTQLSLFTHHMWIGGFCVVGAGAHASIFMVRDYNPAENYNNLLDRIIRHRDAIVSHLNWVCIFLGFHSFGLYIHNDTMRALGRSQDMFSDTAIQLQPIFAQWVQSIHTLAPGNTAPNALATASYAFGGEVVSVGNKVAMMPISLGTADFMVHHIHAFTIHVTVLILVKGFLFSRNSRLIPDKANLGFRFPCDGPGRGGTCQVSGWDHVFLGLFWMYNSLSVAIFHFSWKMQSDVWGSVSPSGNVSHITGGNFAQSAITINGWLRDFLWAQASQVIQSYGSALSAYGLIFLAAHFVWAFSLMFLFSGRGYWQELIESIVWAHNKIKVAPAIQPRALSITQGRAVGVAHYLLGGIGTTWAFFLARIISVG.

Helical transmembrane passes span 73 to 96 (IFSA…FHGA), 159 to 182 (LYCT…FHYH), 198 to 222 (MNHH…HLSL), 294 to 312 (TAHH…GHMY), 349 to 372 (WHAQ…HHMY), 388 to 414 (LSLF…IFMV), 436 to 458 (AIVS…LYIH), and 533 to 551 (FMVH…LILV). Cys-575 and Cys-584 together coordinate [4Fe-4S] cluster. A run of 2 helical transmembrane segments spans residues 591 to 612 (HVFL…HFSW) and 666 to 688 (LSAY…MFLF). His-677 is a binding site for chlorophyll a'. The chlorophyll a site is built by Met-685 and Tyr-693. Residue Trp-694 participates in phylloquinone binding. A helical transmembrane segment spans residues 726 to 746 (AVGVAHYLLGGIGTTWAFFLA).

The protein belongs to the PsaA/PsaB family. The PsaA/B heterodimer binds the P700 chlorophyll special pair and subsequent electron acceptors. PSI consists of a core antenna complex that captures photons, and an electron transfer chain that converts photonic excitation into a charge separation. The eukaryotic PSI reaction center is composed of at least 11 subunits. The cofactor is P700 is a chlorophyll a/chlorophyll a' dimer, A0 is one or more chlorophyll a, A1 is one or both phylloquinones and FX is a shared 4Fe-4S iron-sulfur center..

It localises to the plastid. The protein resides in the chloroplast thylakoid membrane. It carries out the reaction reduced [plastocyanin] + hnu + oxidized [2Fe-2S]-[ferredoxin] = oxidized [plastocyanin] + reduced [2Fe-2S]-[ferredoxin]. In terms of biological role, psaA and PsaB bind P700, the primary electron donor of photosystem I (PSI), as well as the electron acceptors A0, A1 and FX. PSI is a plastocyanin/cytochrome c6-ferredoxin oxidoreductase, converting photonic excitation into a charge separation, which transfers an electron from the donor P700 chlorophyll pair to the spectroscopically characterized acceptors A0, A1, FX, FA and FB in turn. Oxidized P700 is reduced on the lumenal side of the thylakoid membrane by plastocyanin or cytochrome c6. The protein is Photosystem I P700 chlorophyll a apoprotein A1 of Porphyra purpurea (Red seaweed).